Here is a 179-residue protein sequence, read N- to C-terminus: 3-hydroxyanthranilate 3,4-dioxygenase (179 aa).

Arg47 contacts O2. 3 residues coordinate Fe cation: His51, Glu57, and His96. Glu57 lines the substrate pocket. The substrate site is built by Arg100 and Glu110. Fe cation is bound by residues Cys125, Cys128, Cys162, and Cys165.

Belongs to the 3-HAO family. The cofactor is Fe(2+).

It carries out the reaction 3-hydroxyanthranilate + O2 = (2Z,4Z)-2-amino-3-carboxymuconate 6-semialdehyde. The protein operates within cofactor biosynthesis; NAD(+) biosynthesis; quinolinate from L-kynurenine: step 3/3. Its function is as follows. Catalyzes the oxidative ring opening of 3-hydroxyanthranilate to 2-amino-3-carboxymuconate semialdehyde, which spontaneously cyclizes to quinolinate. The polypeptide is 3-hydroxyanthranilate 3,4-dioxygenase (Bacillus cereus (strain ATCC 10987 / NRS 248)).